The sequence spans 37 residues: Large ribosomal subunit protein bL36c (37 aa).

The protein belongs to the bacterial ribosomal protein bL36 family.

Its subcellular location is the plastid. The protein resides in the chloroplast. This is Large ribosomal subunit protein bL36c (rpl36) from Cyanidium caldarium (Red alga).